The chain runs to 333 residues: MKLYEHDGVDLEDGKTVKSGGDKPIPRKIHNRALLSGLAYCISSCSMILVNKFVLSSYNFNAGIFLMLYQNFVSVIIVVGLSLMGLITTEPLTLRLMKVWFPVNVIFVGMLITSMFSLKYINVAMVTVLKNVTNVITAVGEMYLFNKQHDNRVWAALFLMIISAVSGGITDLSFNAVGYAWQIANCFLTASYSLTLRKTMDTAKQVTQSGNLNEFSMVLLNNTLSLPLGLLLSYFFNEMDYLYQTPLLRLPSFWMVMTLSGLLGLAISFTSMWFLHQTGATTYSLVGSLNKIPLSIAGIVLFNVPTSLQNSASILFGLVAGVVFARAKMREKS.

A run of 9 helical transmembrane segments spans residues 33-55 (ALLS…KFVL), 62-84 (AGIF…LSLM), 99-121 (VWFP…LKYI), 153-170 (VWAA…GGIT), 174-196 (FNAV…SLTL), 216-238 (SMVL…FFNE), 253-275 (FWMV…MWFL), 282-304 (TYSL…LFNV), and 308-325 (LQNS…VVFA).

Belongs to the nucleotide-sugar transporter family. GDP-Mannose:GMP antiporter (GMA) (TC 2.A.7.13) subfamily.

Its subcellular location is the golgi apparatus membrane. Its function is as follows. Involved in the import of GDP-mannose from the cytoplasm into the Golgi lumen. Required for the luminal synthesis of a variety of plant cell surface components. Is required for the correct mannosylation of the glycosylinositol phosphoceramides (GIPC). Can indifferently transport GDP-mannose, GDP-Glucose, GDP-Fucose or GDP-Galactose in vitro. The protein is GDP-mannose transporter GONST1 of Arabidopsis thaliana (Mouse-ear cress).